Reading from the N-terminus, the 502-residue chain is N-fatty-acyl-amino acid synthase/hydrolase PM20D1 (502 aa).

A signal peptide spans 1–25 (MAQRCVCVLALVAMLLLVFPTVSRS). Residue H125 participates in Zn(2+) binding. The active site involves D127. D157 contacts Zn(2+). Residue E191 is the Proton acceptor of the active site. Zn(2+) is bound by residues E192 and D217. N-linked (GlcNAc...) asparagine glycosylation occurs at N252. H464 contributes to the Zn(2+) binding site.

It belongs to the peptidase M20A family. Zn(2+) is required as a cofactor.

Its subcellular location is the secreted. It carries out the reaction an N-acyl-L-amino acid + H2O = an L-alpha-amino acid + a carboxylate. The enzyme catalyses an N-acyl-aromatic L-alpha-amino acid + H2O = an aromatic L-alpha-amino acid + a carboxylate. It catalyses the reaction L-phenylalanine + (9Z)-octadecenoate = N-(9Z-octadecenoyl)-L-phenylalanine + H2O. The catalysed reaction is N-(9Z-octadecenoyl)-L-leucine + H2O = L-leucine + (9Z)-octadecenoate. It carries out the reaction N-(5Z,8Z,11Z,14Z)-eicosatetraenoyl-glycine + H2O = (5Z,8Z,11Z,14Z)-eicosatetraenoate + glycine. The enzyme catalyses N-hexadecanoyl-L-phenylalanine + H2O = hexadecanoate + L-phenylalanine. It catalyses the reaction N-octadecanoyl-L-phenylalanine + H2O = octadecanoate + L-phenylalanine. The catalysed reaction is N-(4Z,7Z,10Z,13Z,16Z,19Z-docosahexaenoyl)-L-phenylalanine + H2O = (4Z,7Z,10Z,13Z,16Z,19Z)-docosahexaenoate + L-phenylalanine. It carries out the reaction N-(9Z-octadecenoyl)-L-asparagine + H2O = L-asparagine + (9Z)-octadecenoate. The enzyme catalyses (9Z)-octadecenoate + glycine = N-(9Z-octadecenoyl)glycine + H2O. It catalyses the reaction N-(9Z-octadecenoyl)-L-lysine + H2O = L-lysine + (9Z)-octadecenoate. The catalysed reaction is N-(9Z-octadecenoyl)-L-methionine + H2O = (9Z)-octadecenoate + L-methionine. It carries out the reaction N-(9Z-octadecenoyl)-L-serine + H2O = L-serine + (9Z)-octadecenoate. The enzyme catalyses N-(9Z-octadecenoyl)-L-tryptophan + H2O = L-tryptophan + (9Z)-octadecenoate. It catalyses the reaction N-(9Z-octadecenoyl)-L-tyrosine + H2O = L-tyrosine + (9Z)-octadecenoate. The catalysed reaction is N-(9Z-octadecenoyl)-L-glutamine + H2O = L-glutamine + (9Z)-octadecenoate. It carries out the reaction N-(5Z,8Z,11Z,14Z-eicosatetraenoyl)-L-serine + H2O = (5Z,8Z,11Z,14Z)-eicosatetraenoate + L-serine. The enzyme catalyses (5Z,8Z,11Z,14Z)-eicosatetraenoate + L-phenylalanine = N-(5Z,8Z,11Z,14Z-eicosatetraenoyl)-L-phenylalanine + H2O. It participates in amino-acid metabolism. Its pathway is energy metabolism. It functions in the pathway lipid metabolism; fatty acid metabolism. Its activity is regulated as follows. Lipoproteins are powerful coactivators of PM20D1 activity in vitro and NAA biosynthesis in vivo. Its function is as follows. Secreted enzyme that regulates the endogenous N-fatty acyl amino acid (NAAs) tissue and circulating levels by functioning as a bidirectional NAA synthase/hydrolase. It condenses free fatty acids and free amino acids to generate NAAs and bidirectionally catalyzes the reverse hydrolysis reaction. Some of these NAAs stimulate oxidative metabolism via mitochondrial uncoupling, increasing energy expenditure in a UPC1-independent manner. Thereby, this secreted protein may indirectly regulate whole body energy expenditure. PM20D1 circulates in tight association with both low- and high-density (LDL and HDL,respectively) lipoprotein particles. This Homo sapiens (Human) protein is N-fatty-acyl-amino acid synthase/hydrolase PM20D1.